The primary structure comprises 1048 residues: Nonsense-mediated mRNA decay protein 5 (1048 aa).

The region spanning 24 to 104 is the Importin N-terminal domain; the sequence is AETHLKNASK…KDMLIKTMVS (81 aa). A Phosphoserine modification is found at serine 977.

GTP-bound Ran dissociates the isolated NMD5/TFIIS complex.

It localises to the nucleus. The protein localises to the cytoplasm. In terms of biological role, active in protein import into the nucleus. Its major import substrate is transcription elongation factor TFIIS. This chain is Nonsense-mediated mRNA decay protein 5 (NMD5), found in Saccharomyces cerevisiae (strain ATCC 204508 / S288c) (Baker's yeast).